A 553-amino-acid chain; its full sequence is Putative ABC transporter ATP-binding protein BCE_3323 (553 aa).

ABC transporter domains lie at Ala-7–Phe-245 and Leu-295–Arg-527. ATP-binding positions include Gly-41–Thr-48 and Gly-329–Ser-336.

It belongs to the ABC transporter superfamily.

Its subcellular location is the cell membrane. Functionally, probably part of an ABC transporter complex. Responsible for energy coupling to the transport system. The protein is Putative ABC transporter ATP-binding protein BCE_3323 of Bacillus cereus (strain ATCC 10987 / NRS 248).